Reading from the N-terminus, the 228-residue chain is 5'-methylthioadenosine/S-adenosylhomocysteine nucleosidase (228 aa).

Residue Glu11 is the Proton acceptor of the active site. Residues Gly77, Ile151, and 172–173 (ME) each bind substrate. Catalysis depends on Asp196, which acts as the Proton donor.

The protein belongs to the PNP/UDP phosphorylase family. MtnN subfamily.

The catalysed reaction is S-adenosyl-L-homocysteine + H2O = S-(5-deoxy-D-ribos-5-yl)-L-homocysteine + adenine. It catalyses the reaction S-methyl-5'-thioadenosine + H2O = 5-(methylsulfanyl)-D-ribose + adenine. The enzyme catalyses 5'-deoxyadenosine + H2O = 5-deoxy-D-ribose + adenine. The protein operates within amino-acid biosynthesis; L-methionine biosynthesis via salvage pathway; S-methyl-5-thio-alpha-D-ribose 1-phosphate from S-methyl-5'-thioadenosine (hydrolase route): step 1/2. In terms of biological role, catalyzes the irreversible cleavage of the glycosidic bond in both 5'-methylthioadenosine (MTA) and S-adenosylhomocysteine (SAH/AdoHcy) to adenine and the corresponding thioribose, 5'-methylthioribose and S-ribosylhomocysteine, respectively. Also cleaves 5'-deoxyadenosine, a toxic by-product of radical S-adenosylmethionine (SAM) enzymes, into 5-deoxyribose and adenine. In Staphylococcus carnosus (strain TM300), this protein is 5'-methylthioadenosine/S-adenosylhomocysteine nucleosidase.